A 405-amino-acid chain; its full sequence is Cysteine desulfurase IscS (405 aa).

Pyridoxal 5'-phosphate contacts are provided by residues A75–T76, N156, Q184, and S204–H206. At K207 the chain carries N6-(pyridoxal phosphate)lysine. T244 is a pyridoxal 5'-phosphate binding site. The Cysteine persulfide intermediate role is filled by C329. C329 provides a ligand contact to [2Fe-2S] cluster.

It belongs to the class-V pyridoxal-phosphate-dependent aminotransferase family. NifS/IscS subfamily. In terms of assembly, homodimer. Forms a heterotetramer with IscU, interacts with other sulfur acceptors. The cofactor is pyridoxal 5'-phosphate.

The protein resides in the cytoplasm. The catalysed reaction is (sulfur carrier)-H + L-cysteine = (sulfur carrier)-SH + L-alanine. It functions in the pathway cofactor biosynthesis; iron-sulfur cluster biosynthesis. Its function is as follows. Master enzyme that delivers sulfur to a number of partners involved in Fe-S cluster assembly, tRNA modification or cofactor biosynthesis. Catalyzes the removal of elemental sulfur atoms from cysteine to produce alanine. Functions as a sulfur delivery protein for Fe-S cluster synthesis onto IscU, an Fe-S scaffold assembly protein, as well as other S acceptor proteins. The protein is Cysteine desulfurase IscS of Acinetobacter baumannii (strain AB307-0294).